The sequence spans 207 residues: Uracil phosphoribosyltransferase (207 aa).

5-phospho-alpha-D-ribose 1-diphosphate contacts are provided by residues arginine 77, arginine 102, and 129–137; that span reads DPMLATGGS. Uracil-binding positions include isoleucine 192 and 197–199; that span reads GDA. Position 198 (aspartate 198) interacts with 5-phospho-alpha-D-ribose 1-diphosphate.

This sequence belongs to the UPRTase family. Mg(2+) serves as cofactor.

The enzyme catalyses UMP + diphosphate = 5-phospho-alpha-D-ribose 1-diphosphate + uracil. The protein operates within pyrimidine metabolism; UMP biosynthesis via salvage pathway; UMP from uracil: step 1/1. Its activity is regulated as follows. Allosterically activated by GTP. In terms of biological role, catalyzes the conversion of uracil and 5-phospho-alpha-D-ribose 1-diphosphate (PRPP) to UMP and diphosphate. In Ureaplasma urealyticum serovar 10 (strain ATCC 33699 / Western), this protein is Uracil phosphoribosyltransferase.